We begin with the raw amino-acid sequence, 252 residues long: 3-dehydroquinate dehydratase (252 aa).

3-dehydroquinate contacts are provided by residues Ser21, 46 to 48 (EWR), and Arg82. His143 acts as the Proton donor/acceptor in catalysis. Lys170 serves as the catalytic Schiff-base intermediate with substrate. 3-dehydroquinate contacts are provided by Arg213, Ser232, and Gln236.

It belongs to the type-I 3-dehydroquinase family. Homodimer.

It catalyses the reaction 3-dehydroquinate = 3-dehydroshikimate + H2O. The protein operates within metabolic intermediate biosynthesis; chorismate biosynthesis; chorismate from D-erythrose 4-phosphate and phosphoenolpyruvate: step 3/7. In terms of biological role, involved in the third step of the chorismate pathway, which leads to the biosynthesis of aromatic amino acids. Catalyzes the cis-dehydration of 3-dehydroquinate (DHQ) and introduces the first double bond of the aromatic ring to yield 3-dehydroshikimate. In Escherichia coli O7:K1 (strain IAI39 / ExPEC), this protein is 3-dehydroquinate dehydratase.